The primary structure comprises 154 residues: Ribosomal RNA large subunit methyltransferase H (154 aa).

Residues L70, G102, and L121–F126 each bind S-adenosyl-L-methionine.

The protein belongs to the RNA methyltransferase RlmH family. In terms of assembly, homodimer.

Its subcellular location is the cytoplasm. The enzyme catalyses pseudouridine(1915) in 23S rRNA + S-adenosyl-L-methionine = N(3)-methylpseudouridine(1915) in 23S rRNA + S-adenosyl-L-homocysteine + H(+). Its function is as follows. Specifically methylates the pseudouridine at position 1915 (m3Psi1915) in 23S rRNA. The protein is Ribosomal RNA large subunit methyltransferase H of Geobacter metallireducens (strain ATCC 53774 / DSM 7210 / GS-15).